A 158-amino-acid polypeptide reads, in one-letter code: Endoribonuclease YbeY (158 aa).

Zn(2+)-binding residues include histidine 118, histidine 122, and histidine 128.

The protein belongs to the endoribonuclease YbeY family. Zn(2+) serves as cofactor.

The protein resides in the cytoplasm. Single strand-specific metallo-endoribonuclease involved in late-stage 70S ribosome quality control and in maturation of the 3' terminus of the 16S rRNA. The sequence is that of Endoribonuclease YbeY from Haemophilus ducreyi (strain 35000HP / ATCC 700724).